Consider the following 215-residue polypeptide: MKKIVVLLGMLLAPWFSSAVQAKGEAGEFDYYAMALSWSPEHCAIKPADRDQCSRQLGFVLHGLWPQYQRGYPSSCTRERLDPAMEQEFAGLYPSRFLYRHEWEKHGTCSGLSQHDFHQLASDLRQKREDPGRLSVSCRAAAQKPLPAQGGSGQCQRLAGPGQHHGGLRRRWRFLREVYICLNKEGTDAVTCSDEMQKRELPSCGQPDFLLRTVR.

A signal peptide spans 1–22; the sequence is MKKIVVLLGMLLAPWFSSAVQA. Residues His62, Glu102, and His106 contribute to the active site. Positions 144-166 are disordered; it reads KPLPAQGGSGQCQRLAGPGQHHG.

This sequence belongs to the RNase T2 family.

Its subcellular location is the periplasm. The protein resides in the cytoplasm. In terms of biological role, one of the few RNases that cleave the phosphodiester bond between any two nucleotide. Shows a preference for adenylic acid. The polypeptide is Ribonuclease (Aeromonas hydrophila).